The sequence spans 718 residues: Polyribonucleotide nucleotidyltransferase (718 aa).

Mg(2+) is bound by residues Asp496 and Asp502. Positions 563–622 (PRLLTIKIDPDMIGLVIGPGGKTIKGITEETGAKIDIEDDGTVTISAVDENKAKRARNIV) constitute a KH domain. The region spanning 632 to 700 (GDVYAGRVTR…NKGRINLTRL (69 aa)) is the S1 motif domain.

As to quaternary structure, may form homodimers or higher order multimers. Interacts with RNase E (rne). Requires Mg(2+) as cofactor.

Its subcellular location is the cytoplasm. The enzyme catalyses RNA(n+1) + phosphate = RNA(n) + a ribonucleoside 5'-diphosphate. In terms of biological role, involved in mRNA degradation. Catalyzes the phosphorolysis of single-stranded polyribonucleotides processively in the 3'- to 5'-direction. The protein is Polyribonucleotide nucleotidyltransferase of Nostoc sp. (strain PCC 7120 / SAG 25.82 / UTEX 2576).